Reading from the N-terminus, the 276-residue chain is Pyrroline-5-carboxylate reductase (276 aa).

It belongs to the pyrroline-5-carboxylate reductase family.

The protein resides in the cytoplasm. The catalysed reaction is L-proline + NADP(+) = (S)-1-pyrroline-5-carboxylate + NADPH + 2 H(+). It catalyses the reaction L-proline + NAD(+) = (S)-1-pyrroline-5-carboxylate + NADH + 2 H(+). It participates in amino-acid biosynthesis; L-proline biosynthesis; L-proline from L-glutamate 5-semialdehyde: step 1/1. The chain is Pyrroline-5-carboxylate reductase (PROC1) from Arabidopsis thaliana (Mouse-ear cress).